A 688-amino-acid polypeptide reads, in one-letter code: G protein-coupled receptor kinase 3 (688 aa).

Residues 1 to 190 (MADLEAVLAD…ELNIHLSMND (190 aa)) form an N-terminal region. In terms of domain architecture, RGS spans 54-175 (TFDKIFNQKI…MESEKFTRFC (122 aa)). Positions 191 to 453 (FSVHRIIGRG…ARELKEHIFF (263 aa)) constitute a Protein kinase domain. ATP contacts are provided by residues 197-205 (IGRGGFGEV) and Lys-220. Asp-317 functions as the Proton acceptor in the catalytic mechanism. Positions 454-521 (KGIDWQYVYL…MISERWQQEV (68 aa)) constitute an AGC-kinase C-terminal domain. The 95-residue stretch at 558-652 (DCIMHGYMLK…WLKELTCTFN (95 aa)) folds into the PH domain.

The protein belongs to the protein kinase superfamily. AGC Ser/Thr protein kinase family. GPRK subfamily. In terms of assembly, interacts with GIT1. Post-translationally, ubiquitinated. In terms of tissue distribution, expressed in brain cortex, hippocampus, striatum, hypothalamus, cerebellum and brainstem (at protein level).

The protein resides in the postsynapse. It is found in the presynapse. The catalysed reaction is [beta-adrenergic receptor] + ATP = [beta-adrenergic receptor]-phosphate + ADP + H(+). Functionally, specifically phosphorylates the agonist-occupied form of the beta-adrenergic and closely related receptors. The polypeptide is G protein-coupled receptor kinase 3 (Rattus norvegicus (Rat)).